A 964-amino-acid polypeptide reads, in one-letter code: Chaperone protein ClpB4, mitochondrial (964 aa).

Residues Met1–Thr39 constitute a mitochondrion transit peptide. One can recognise a Clp R domain in the interval Val83–Asp227. Repeat stretches follow at residues Phe88 to Gln153 and Leu164 to Asp227. The i stretch occupies residues Leu242 to Pro490. ATP-binding positions include Gly287 to Thr294 and Gly690 to Thr697. Residues Val616 to Ser807 form an II region.

This sequence belongs to the ClpA/ClpB family.

The protein resides in the mitochondrion. Its function is as follows. Molecular chaperone that does not seem to be involved in heat stress response or tolerance. The sequence is that of Chaperone protein ClpB4, mitochondrial (CLPB4) from Arabidopsis thaliana (Mouse-ear cress).